The chain runs to 609 residues: Glutamine--fructose-6-phosphate aminotransferase [isomerizing] (609 aa).

Residue C2 is the Nucleophile; for GATase activity of the active site. Positions 2 to 217 constitute a Glutamine amidotransferase type-2 domain; it reads CGIVGYIGRR…EGWLAELTPE (216 aa). 2 SIS domains span residues 286-425 and 458-599; these read SAAE…QNGR and AAEA…VDKP. K604 (for Fru-6P isomerization activity) is an active-site residue.

As to quaternary structure, homodimer.

Its subcellular location is the cytoplasm. It catalyses the reaction D-fructose 6-phosphate + L-glutamine = D-glucosamine 6-phosphate + L-glutamate. Functionally, catalyzes the first step in hexosamine metabolism, converting fructose-6P into glucosamine-6P using glutamine as a nitrogen source. The polypeptide is Glutamine--fructose-6-phosphate aminotransferase [isomerizing] (Symbiobacterium thermophilum (strain DSM 24528 / JCM 14929 / IAM 14863 / T)).